Here is a 166-residue protein sequence, read N- to C-terminus: Phosphopantetheine adenylyltransferase (166 aa).

Serine 11 provides a ligand contact to substrate. Residues 11-12 and histidine 19 contribute to the ATP site; that span reads SF. 3 residues coordinate substrate: lysine 43, alanine 76, and arginine 90. Residues 91-93, glutamate 101, and 126-132 each bind ATP; these read GLR and MQPISSS.

Belongs to the bacterial CoaD family. In terms of assembly, homohexamer. Requires Mg(2+) as cofactor.

Its subcellular location is the cytoplasm. The enzyme catalyses (R)-4'-phosphopantetheine + ATP + H(+) = 3'-dephospho-CoA + diphosphate. Its pathway is cofactor biosynthesis; coenzyme A biosynthesis; CoA from (R)-pantothenate: step 4/5. In terms of biological role, reversibly transfers an adenylyl group from ATP to 4'-phosphopantetheine, yielding dephospho-CoA (dPCoA) and pyrophosphate. The protein is Phosphopantetheine adenylyltransferase of Streptococcus uberis (strain ATCC BAA-854 / 0140J).